The primary structure comprises 363 residues: Small ribosomal subunit biogenesis GTPase RsgA (363 aa).

A CP-type G domain is found at 112-268 (HQQVIAANID…LIDTPGMREL (157 aa)). GTP-binding positions include 157–160 (TKAD) and 210–218 (GSSGAGKST). Zn(2+) is bound by residues Cys-291, Cys-296, His-298, and Cys-304. Residues 340-363 (RVAQNNRGKGSGKRPASVDRPGRR) are disordered.

This sequence belongs to the TRAFAC class YlqF/YawG GTPase family. RsgA subfamily. In terms of assembly, monomer. Associates with 30S ribosomal subunit, binds 16S rRNA. Requires Zn(2+) as cofactor.

Its subcellular location is the cytoplasm. Functionally, one of several proteins that assist in the late maturation steps of the functional core of the 30S ribosomal subunit. Helps release RbfA from mature subunits. May play a role in the assembly of ribosomal proteins into the subunit. Circularly permuted GTPase that catalyzes slow GTP hydrolysis, GTPase activity is stimulated by the 30S ribosomal subunit. The polypeptide is Small ribosomal subunit biogenesis GTPase RsgA (Xanthomonas campestris pv. campestris (strain 8004)).